Consider the following 2028-residue polypeptide: Pecanex-like protein 3 (2028 aa).

A run of 2 helical transmembrane segments spans residues 33–53 (CFHL…YMVL) and 54–74 (PPSL…FATI). N-linked (GlcNAc...) asparagine glycosylation is present at N95. A disordered region spans residues 96 to 116 (STMGEQEEEAAQGESSLPRDP). The residue at position 127 (S127) is a Phosphoserine. T129 carries the post-translational modification Phosphothreonine. 2 disordered regions span residues 193-239 (IGDL…PMSP) and 263-625 (LVRT…SHSR). The segment covering 198–208 (QTPPGVVPDPS) has biased composition (pro residues). 2 stretches are compositionally biased toward basic and acidic residues: residues 263-273 (LVRTSSRREQC) and 305-319 (TDRE…EKTN). N319 is a glycosylation site (N-linked (GlcNAc...) asparagine). Phosphothreonine is present on T370. Phosphoserine is present on residues S392 and S431. Positions 427-437 (GSELSPASSLR) are enriched in polar residues. Positions 444-459 (TDSSSSTSCYSPESSQ) are enriched in low complexity. Residues 488 to 497 (TQRTPSTASA) show a composition bias toward polar residues. Phosphoserine occurs at positions 505 and 521. The next 7 helical transmembrane spans lie at 793-815 (NIFG…LKGF), 819-836 (IWVF…YSLL), 852-872 (WVIA…IWLL), 880-900 (PFPP…FFCA), 903-923 (VATV…LPQV), 946-968 (SPLT…YGFC), and 980-1000 (HVPV…YHLS). A Phosphoserine modification is found at S1025. 4 consecutive transmembrane segments (helical) span residues 1053–1073 (LVMC…TVFI), 1078–1098 (VLGF…HYLL), 1244–1264 (FVLT…HAFA), and 1280–1300 (LLSG…VFIM). At S1697 the chain carries Phosphoserine. N1770 is a glycosylation site (N-linked (GlcNAc...) asparagine). Residues 1845–2028 (GLTSLSNHPP…AAQPLLEHQY (184 aa)) are disordered. Pro residues predominate over residues 1890–1921 (RPPPLLQWPPPRLPGPPPASPAPTEGPRPSRP). A phosphoserine mark is found at S1909 and S1955. Positions 1966 to 1977 (PLDLSLSPDVSS) are enriched in low complexity. Over residues 1978–1987 (EASPARTTQD) the composition is skewed to polar residues.

This sequence belongs to the pecanex family.

The protein resides in the membrane. This chain is Pecanex-like protein 3, found in Mus musculus (Mouse).